The primary structure comprises 142 residues: Large ribosomal subunit protein uL13 (142 aa).

It belongs to the universal ribosomal protein uL13 family. As to quaternary structure, part of the 50S ribosomal subunit.

Its function is as follows. This protein is one of the early assembly proteins of the 50S ribosomal subunit, although it is not seen to bind rRNA by itself. It is important during the early stages of 50S assembly. The chain is Large ribosomal subunit protein uL13 from Shewanella baltica (strain OS185).